A 333-amino-acid chain; its full sequence is Glycerol-3-phosphate dehydrogenase [NAD(P)+] (333 aa).

Positions 13, 33, and 108 each coordinate NADPH. Positions 108 and 138 each coordinate sn-glycerol 3-phosphate. Position 142 (Ser-142) interacts with NADPH. Residues Lys-193, Asp-246, Ser-256, Arg-257, and Asn-258 each coordinate sn-glycerol 3-phosphate. The active-site Proton acceptor is the Lys-193. Residue Arg-257 participates in NADPH binding. NADPH is bound by residues Val-281 and Glu-283.

This sequence belongs to the NAD-dependent glycerol-3-phosphate dehydrogenase family.

The protein resides in the cytoplasm. It carries out the reaction sn-glycerol 3-phosphate + NAD(+) = dihydroxyacetone phosphate + NADH + H(+). It catalyses the reaction sn-glycerol 3-phosphate + NADP(+) = dihydroxyacetone phosphate + NADPH + H(+). Its pathway is membrane lipid metabolism; glycerophospholipid metabolism. In terms of biological role, catalyzes the reduction of the glycolytic intermediate dihydroxyacetone phosphate (DHAP) to sn-glycerol 3-phosphate (G3P), the key precursor for phospholipid synthesis. The chain is Glycerol-3-phosphate dehydrogenase [NAD(P)+] from Bifidobacterium longum (strain DJO10A).